The following is a 454-amino-acid chain: Carbamoyl phosphate synthase arginine-specific small chain (454 aa).

Residues 1 to 29 constitute a mitochondrion transit peptide; that stretch reads MMFSRFFKAVPARAPAFSSPLPVYQARTM. One can recognise a Glutamine amidotransferase type-1 domain in the interval 219–406; sequence HVAVLDCGVK…IDSVKKYKNS (188 aa). Cysteine 295 functions as the Nucleophile in the catalytic mechanism. Residues histidine 379 and glutamate 381 contribute to the active site.

It belongs to the CarA family. Heterodimer composed of 2 chains; the small (or glutamine) chain promotes the hydrolysis of glutamine to ammonia, which is used by the large (or ammonia) chain to synthesize carbamoyl phosphate.

The protein localises to the mitochondrion matrix. It carries out the reaction hydrogencarbonate + L-glutamine + 2 ATP + H2O = carbamoyl phosphate + L-glutamate + 2 ADP + phosphate + 2 H(+). The catalysed reaction is L-glutamine + H2O = L-glutamate + NH4(+). It functions in the pathway amino-acid biosynthesis; L-arginine biosynthesis; carbamoyl phosphate from bicarbonate: step 1/1. Its function is as follows. Small subunit of the arginine-specific carbamoyl phosphate synthase (CPSase). CPSase catalyzes the formation of carbamoyl phosphate from the ammonia moiety of glutamine, carbonate, and phosphate donated by ATP, the first step of the arginine biosynthetic pathway. The small subunit (glutamine amidotransferase) binds and cleaves glutamine to supply the large subunit with the substrate ammonia. In Emericella nidulans (strain FGSC A4 / ATCC 38163 / CBS 112.46 / NRRL 194 / M139) (Aspergillus nidulans), this protein is Carbamoyl phosphate synthase arginine-specific small chain (cpa-1).